The sequence spans 267 residues: Undecaprenyl-diphosphatase (267 aa).

A run of 8 helical transmembrane segments spans residues 1 to 21 (MTYFEAFFLALLQGFTEFLPI), 39 to 59 (QGLAFDVAVHVGTLAAVVIYF), 83 to 103 (SNLAWLIVLATIPAALFGLLF), 111 to 131 (LRSAWVIAATTIVFGLLLWWV), 149 to 169 (ALFLGIAQAMAMIPGTSRSGI), 189 to 209 (FLMSIPIITLAGSYLGLKLAM), 218 to 238 (LLSTGVIVSFISAYICIHFFL), and 246 to 266 (MMPFVIYRILLGSSLLVWLAL).

This sequence belongs to the UppP family.

The protein resides in the cell inner membrane. It carries out the reaction di-trans,octa-cis-undecaprenyl diphosphate + H2O = di-trans,octa-cis-undecaprenyl phosphate + phosphate + H(+). Functionally, catalyzes the dephosphorylation of undecaprenyl diphosphate (UPP). Confers resistance to bacitracin. In Aliivibrio fischeri (strain ATCC 700601 / ES114) (Vibrio fischeri), this protein is Undecaprenyl-diphosphatase.